The chain runs to 411 residues: Phosphoglycerate kinase (411 aa).

Substrate is bound by residues 28–30 (DIN), Arg-45, 68–71 (HQSR), Arg-125, and Arg-165. Residues Glu-338 and 364–367 (GGHL) each bind ATP.

It belongs to the phosphoglycerate kinase family. As to quaternary structure, homodimer.

Its subcellular location is the cytoplasm. It catalyses the reaction (2R)-3-phosphoglycerate + ATP = (2R)-3-phospho-glyceroyl phosphate + ADP. Its pathway is carbohydrate degradation; glycolysis; pyruvate from D-glyceraldehyde 3-phosphate: step 2/5. This chain is Phosphoglycerate kinase (pgk), found in Methanothermobacter thermautotrophicus (strain ATCC 29096 / DSM 1053 / JCM 10044 / NBRC 100330 / Delta H) (Methanobacterium thermoautotrophicum).